A 399-amino-acid chain; its full sequence is Ribonuclease D (399 aa).

The region spanning 31 to 197 (RVVTDNTALL…PLYHILEKEL (167 aa)) is the 3'-5' exonuclease domain. The HRDC domain occupies 239–318 (NPLELSRLRV…SQARRISSND (80 aa)).

This sequence belongs to the RNase D family. Requires a divalent metal cation as cofactor.

The protein resides in the cytoplasm. The enzyme catalyses Exonucleolytic cleavage that removes extra residues from the 3'-terminus of tRNA to produce 5'-mononucleotides.. Functionally, exonuclease involved in the 3' processing of various precursor tRNAs. Initiates hydrolysis at the 3'-terminus of an RNA molecule and releases 5'-mononucleotides. The sequence is that of Ribonuclease D from Haemophilus influenzae (strain ATCC 51907 / DSM 11121 / KW20 / Rd).